A 461-amino-acid chain; its full sequence is Cysteine--tRNA ligase (461 aa).

Cysteine 28 contributes to the Zn(2+) binding site. Positions 30 to 40 (ITVYDLCHIGH) match the 'HIGH' region motif. 3 residues coordinate Zn(2+): cysteine 209, histidine 234, and glutamate 238. The short motif at 266–270 (KMSKS) is the 'KMSKS' region element. ATP is bound at residue lysine 269.

Belongs to the class-I aminoacyl-tRNA synthetase family. As to quaternary structure, monomer. Zn(2+) serves as cofactor.

It localises to the cytoplasm. The catalysed reaction is tRNA(Cys) + L-cysteine + ATP = L-cysteinyl-tRNA(Cys) + AMP + diphosphate. This chain is Cysteine--tRNA ligase, found in Escherichia coli O17:K52:H18 (strain UMN026 / ExPEC).